The primary structure comprises 347 residues: MEKINEYGSERIVSPERTGYDSYSLRPKFLSEYIGQENIKERLKLAIQASKMRGEQLDHILLAGPPGLGKTTLATIIANELNANIHVTSGPILEKQGDLAAILTNLEAGDVLFIDEIHRMNRNVEEILYSAMEDFQVDIMIGKGPAARSIRVELQPFTLIGATTRSGLLTSPLRNRFGMIFEMNFYTQEELKMIITRAAEVMGTLIDDDAALSIAKRSRGTPRIAIRLLKRVRDLSTVRGSENITLNIVEEVMRLLGVDEFGLDEMDRKILKTIIEIYKGGPVGLKSLAASLGITEDTISEVYEPFLVQSGFIARGARGRIATEKAYKYLGYNTLPGGLFDGFGNIE.

The large ATPase domain (RuvB-L) stretch occupies residues 4–186; it reads INEYGSERIV…FGMIFEMNFY (183 aa). Residues Leu25, Arg26, Gly67, Lys70, Thr71, Thr72, 133–135, Arg176, Tyr186, and Arg223 contribute to the ATP site; that span reads EDF. Residue Thr71 coordinates Mg(2+). A small ATPAse domain (RuvB-S) region spans residues 187 to 257; the sequence is TQEELKMIIT…IVEEVMRLLG (71 aa). Positions 260-347 are head domain (RuvB-H); the sequence is EFGLDEMDRK…GLFDGFGNIE (88 aa). Positions 315 and 320 each coordinate DNA.

Belongs to the RuvB family. Homohexamer. Forms an RuvA(8)-RuvB(12)-Holliday junction (HJ) complex. HJ DNA is sandwiched between 2 RuvA tetramers; dsDNA enters through RuvA and exits via RuvB. An RuvB hexamer assembles on each DNA strand where it exits the tetramer. Each RuvB hexamer is contacted by two RuvA subunits (via domain III) on 2 adjacent RuvB subunits; this complex drives branch migration. In the full resolvosome a probable DNA-RuvA(4)-RuvB(12)-RuvC(2) complex forms which resolves the HJ.

Its subcellular location is the cytoplasm. It catalyses the reaction ATP + H2O = ADP + phosphate + H(+). Its function is as follows. The RuvA-RuvB-RuvC complex processes Holliday junction (HJ) DNA during genetic recombination and DNA repair, while the RuvA-RuvB complex plays an important role in the rescue of blocked DNA replication forks via replication fork reversal (RFR). RuvA specifically binds to HJ cruciform DNA, conferring on it an open structure. The RuvB hexamer acts as an ATP-dependent pump, pulling dsDNA into and through the RuvAB complex. RuvB forms 2 homohexamers on either side of HJ DNA bound by 1 or 2 RuvA tetramers; 4 subunits per hexamer contact DNA at a time. Coordinated motions by a converter formed by DNA-disengaged RuvB subunits stimulates ATP hydrolysis and nucleotide exchange. Immobilization of the converter enables RuvB to convert the ATP-contained energy into a lever motion, pulling 2 nucleotides of DNA out of the RuvA tetramer per ATP hydrolyzed, thus driving DNA branch migration. The RuvB motors rotate together with the DNA substrate, which together with the progressing nucleotide cycle form the mechanistic basis for DNA recombination by continuous HJ branch migration. Branch migration allows RuvC to scan DNA until it finds its consensus sequence, where it cleaves and resolves cruciform DNA. The polypeptide is Holliday junction branch migration complex subunit RuvB (Fervidobacterium nodosum (strain ATCC 35602 / DSM 5306 / Rt17-B1)).